The primary structure comprises 459 residues: Elongation factor 1-alpha (459 aa).

Position 2 is a n,N,N-trimethylglycine (Gly2). An N6,N6-dimethyllysine; alternate modification is found at Lys3. Lys3 carries the N6-methyllysine; alternate modification. Residues 5–240 enclose the tr-type G domain; sequence KTHVNVVVIG…DAVDPPTRPS (236 aa). The interval 14-21 is G1; that stretch reads GHVDSGKS. 14–21 provides a ligand contact to GTP; that stretch reads GHVDSGKS. Lys30 carries the post-translational modification N6-methyllysine. Positions 70–74 are G2; sequence VITID. Lys79 bears the N6,N6,N6-trimethyllysine mark. Positions 91 to 94 are G3; it reads DAPG. Residues 91–95 and 153–156 contribute to the GTP site; these read DAPGH and NKMD. The segment at 153 to 156 is G4; it reads NKMD. The interval 192–194 is G5; it reads SGW. Lys316 carries the N6,N6-dimethyllysine; alternate modification. At Lys316 the chain carries N6-methyllysine; alternate. Lys390 carries the post-translational modification N6-methyllysine.

The protein belongs to the TRAFAC class translation factor GTPase superfamily. Classic translation factor GTPase family. EF-Tu/EF-1A subfamily.

Its subcellular location is the cytoplasm. In terms of biological role, this protein promotes the GTP-dependent binding of aminoacyl-tRNA to the A-site of ribosomes during protein biosynthesis. This is Elongation factor 1-alpha (TEF) from Blastobotrys adeninivorans (Yeast).